The primary structure comprises 466 residues: Muscarinic acetylcholine receptor M2 (466 aa).

The Extracellular segment spans residues 1–22 (MNNSTNSSNSGLALTSPYKTFE). 3 N-linked (GlcNAc...) asparagine glycosylation sites follow: N2, N3, and N6. The helical transmembrane segment at 23–45 (VVFIVLVAGSLSLVTIIGNILVM) threads the bilayer. Residues 46–59 (VSIKVNRHLQTVNN) are Cytoplasmic-facing. The helical transmembrane segment at 60 to 80 (YFLFSLACADLIIGVFSMNLY) threads the bilayer. Topologically, residues 81–97 (TLYTVIGYWPLGPVVCD) are extracellular. A disulfide bridge connects residues C96 and C176. Residues 98–119 (LWLALDYVVSNASVMNLLIISF) traverse the membrane as a helical segment. The short motif at 120–122 (DRY) is the Important for signaling element. Topologically, residues 120 to 139 (DRYFCVTKPLTYPVKRTTKM) are cytoplasmic. A helical membrane pass occupies residues 140–162 (AGMMIAAAWVLSFILWAPAILFW). Over 163-184 (QFIVGVRTVEDGECYIQFFSNA) the chain is Extracellular. A helical transmembrane segment spans residues 185 to 209 (AVTFGTAIAAFYLPVIIMTVLYWHI). Topologically, residues 210-387 (SRASKSRIKK…PPSREKKVTR (178 aa)) are cytoplasmic. Residues 218 to 320 (KKDKKEPVAN…SLGHSKDENS (103 aa)) are disordered. S232 is modified (phosphoserine). The segment covering 254–270 (ALEHNKIQNGKAPRDAV) has biased composition (basic and acidic residues). Composition is skewed to polar residues over residues 284-293 (NDSTSVSAVA) and 304-313 (DENTVSTSLG). The chain crosses the membrane as a helical span at residues 388–410 (TILAILLAFIITWAPYNVMVLIN). Residues 411–418 (TFCAPCIP) lie on the Extracellular side of the membrane. C413 and C416 form a disulfide bridge. The helical transmembrane segment at 419-442 (NTVWTIGYWLCYINSTINPACYAL) threads the bilayer. Positions 436 to 440 (NPACY) match the Important for signaling motif. Topologically, residues 443-466 (CNATFKKTFKHLLMCHYKNIGATR) are cytoplasmic. A phosphothreonine mark is found at T446, T450, and T465.

This sequence belongs to the G-protein coupled receptor 1 family. Muscarinic acetylcholine receptor subfamily. CHRM2 sub-subfamily. As to quaternary structure, interacts with ARRB1 and ARRB2. Interacts with RACK1; the interaction regulates CHRM2 internalization. In terms of processing, phosphorylated in response to agonist treatment.

Its subcellular location is the cell membrane. The protein localises to the postsynaptic cell membrane. Its function is as follows. The muscarinic acetylcholine receptor mediates various cellular responses, including inhibition of adenylate cyclase, breakdown of phosphoinositides and modulation of potassium channels through the action of G proteins. Primary transducing effect is adenylate cyclase inhibition. The protein is Muscarinic acetylcholine receptor M2 (CHRM2) of Sus scrofa (Pig).